Consider the following 332-residue polypeptide: Holliday junction branch migration complex subunit RuvB (332 aa).

The tract at residues 1 to 181 is large ATPase domain (RuvB-L); it reads MARILDNNVM…FGITGHMEYY (181 aa). ATP is bound by residues Leu-20, Arg-21, Gly-62, Lys-65, Thr-66, Thr-67, 128–130, Arg-171, Tyr-181, and Arg-218; that span reads EDF. Thr-66 contacts Mg(2+). Positions 182–252 are small ATPAse domain (RuvB-S); the sequence is QEKDLTEIVE…ITDRALTMLD (71 aa). The interval 255–332 is head domain (RuvB-H); sequence REGLDYIDQK…RHLGYPYQNT (78 aa). DNA contacts are provided by Arg-291, Arg-310, Arg-312, and Arg-315.

The protein belongs to the RuvB family. Homohexamer. Forms an RuvA(8)-RuvB(12)-Holliday junction (HJ) complex. HJ DNA is sandwiched between 2 RuvA tetramers; dsDNA enters through RuvA and exits via RuvB. An RuvB hexamer assembles on each DNA strand where it exits the tetramer. Each RuvB hexamer is contacted by two RuvA subunits (via domain III) on 2 adjacent RuvB subunits; this complex drives branch migration. In the full resolvosome a probable DNA-RuvA(4)-RuvB(12)-RuvC(2) complex forms which resolves the HJ.

The protein localises to the cytoplasm. It catalyses the reaction ATP + H2O = ADP + phosphate + H(+). Its function is as follows. The RuvA-RuvB-RuvC complex processes Holliday junction (HJ) DNA during genetic recombination and DNA repair, while the RuvA-RuvB complex plays an important role in the rescue of blocked DNA replication forks via replication fork reversal (RFR). RuvA specifically binds to HJ cruciform DNA, conferring on it an open structure. The RuvB hexamer acts as an ATP-dependent pump, pulling dsDNA into and through the RuvAB complex. RuvB forms 2 homohexamers on either side of HJ DNA bound by 1 or 2 RuvA tetramers; 4 subunits per hexamer contact DNA at a time. Coordinated motions by a converter formed by DNA-disengaged RuvB subunits stimulates ATP hydrolysis and nucleotide exchange. Immobilization of the converter enables RuvB to convert the ATP-contained energy into a lever motion, pulling 2 nucleotides of DNA out of the RuvA tetramer per ATP hydrolyzed, thus driving DNA branch migration. The RuvB motors rotate together with the DNA substrate, which together with the progressing nucleotide cycle form the mechanistic basis for DNA recombination by continuous HJ branch migration. Branch migration allows RuvC to scan DNA until it finds its consensus sequence, where it cleaves and resolves cruciform DNA. This chain is Holliday junction branch migration complex subunit RuvB, found in Streptococcus pyogenes serotype M1.